The chain runs to 440 residues: tRNA modification GTPase MnmE (440 aa).

Residues Arg-23, Glu-80, and Lys-120 each contribute to the (6S)-5-formyl-5,6,7,8-tetrahydrofolate site. Residues 217–366 form the TrmE-type G domain; sequence GLKIVIAGEP…LLAMLQAHLP (150 aa). Asn-227 contacts K(+). Residues 227–232, 246–252, and 271–274 contribute to the GTP site; these read NAGKSS, TEIAGTT, and DTAG. Ser-231 contributes to the Mg(2+) binding site. K(+) contacts are provided by Thr-246, Ile-248, and Thr-251. Thr-252 lines the Mg(2+) pocket. Lys-440 provides a ligand contact to (6S)-5-formyl-5,6,7,8-tetrahydrofolate.

The protein belongs to the TRAFAC class TrmE-Era-EngA-EngB-Septin-like GTPase superfamily. TrmE GTPase family. Homodimer. Heterotetramer of two MnmE and two MnmG subunits. K(+) is required as a cofactor.

It localises to the cytoplasm. Its function is as follows. Exhibits a very high intrinsic GTPase hydrolysis rate. Involved in the addition of a carboxymethylaminomethyl (cmnm) group at the wobble position (U34) of certain tRNAs, forming tRNA-cmnm(5)s(2)U34. The polypeptide is tRNA modification GTPase MnmE (Sinorhizobium medicae (strain WSM419) (Ensifer medicae)).